Reading from the N-terminus, the 723-residue chain is LPS-assembly protein LptD (723 aa).

The N-terminal stretch at 1–23 (MNTLKLCLILYACLVLLPVRVMS) is a signal peptide.

This sequence belongs to the LptD family. In terms of assembly, component of the lipopolysaccharide transport and assembly complex. Interacts with LptE and LptA.

The protein resides in the cell outer membrane. In terms of biological role, together with LptE, is involved in the assembly of lipopolysaccharide (LPS) at the surface of the outer membrane. This chain is LPS-assembly protein LptD, found in Nitrosomonas europaea (strain ATCC 19718 / CIP 103999 / KCTC 2705 / NBRC 14298).